A 671-amino-acid chain; its full sequence is DNA ligase (671 aa).

NAD(+) is bound by residues D32–D36, S81–L82, and E113. The active-site N6-AMP-lysine intermediate is K115. 4 residues coordinate NAD(+): R136, E173, K290, and K314. Positions 408, 411, 426, and 432 each coordinate Zn(2+). Residues E593–S671 form the BRCT domain.

Belongs to the NAD-dependent DNA ligase family. LigA subfamily. It depends on Mg(2+) as a cofactor. Mn(2+) is required as a cofactor.

The enzyme catalyses NAD(+) + (deoxyribonucleotide)n-3'-hydroxyl + 5'-phospho-(deoxyribonucleotide)m = (deoxyribonucleotide)n+m + AMP + beta-nicotinamide D-nucleotide.. DNA ligase that catalyzes the formation of phosphodiester linkages between 5'-phosphoryl and 3'-hydroxyl groups in double-stranded DNA using NAD as a coenzyme and as the energy source for the reaction. It is essential for DNA replication and repair of damaged DNA. This is DNA ligase from Escherichia coli O127:H6 (strain E2348/69 / EPEC).